The sequence spans 486 residues: Elastin-binding protein EbpS (486 aa).

Positions 1-40 (MSNNFKDDFEKNRQSIDTNSHQDHTEDVEKDQSELEHQDT) are enriched in basic and acidic residues. The tract at residues 1–314 (MSNNFKDDFE…NHDRDKERKK (314 aa)) is disordered. Topologically, residues 2-204 (SNNFKDDFEK…ESKDHHSGKK (203 aa)) are extracellular. Residues 14–34 (QSIDTNSHQDHTEDVEKDQSE) form an elastin-binding region. Polar residues predominate over residues 64–85 (TNHNKQVHNESQTSEDNVQNEA). 2 stretches are compositionally biased toward basic and acidic residues: residues 103 to 118 (EPSH…EEYY) and 126 to 149 (DKSH…ENNT). The span at 150–166 (EHSTVSDKSIAEQSQQP) shows a compositional bias: polar residues. The segment covering 180-199 (SKDKHDDVTVKQDKDESKDH) has biased composition (basic and acidic residues). Low complexity-rich tracts occupy residues 204 to 225 (KGAA…MGVS) and 233 to 246 (DAQN…SNNS). Residues 205–225 (GAAIGAGTAGVAGAAGAMGVS) form a helical membrane-spanning segment. At 226 to 319 (KAKKHSNDAQ…KERKKGGMAK (94 aa)) the chain is on the cytoplasmic side. The span at 247-259 (TEDKASQDKSKDH) shows a compositional bias: basic and acidic residues. Low complexity predominate over residues 278–297 (GAASKSASAASKPHASNNAS). Basic and acidic residues predominate over residues 299-314 (NHDEHDNHDRDKERKK). A helical membrane pass occupies residues 320–340 (VLLPLIAAVLIIGALAIFGGM). The Extracellular portion of the chain corresponds to 341 to 486 (ALNNHNNGTK…IRNGQQIVIP (146 aa)). Residues 351 to 440 (ENKIANTNKN…QRQGGGQRHT (90 aa)) form a disordered region. The span at 361-398 (NADESKDKDTSKDASKDKSKSTDSDKSKEDQDKATKDE) shows a compositional bias: basic and acidic residues. Positions 403 to 431 (QNNANQANNQAQNNQNQQQANQNQQQQQQ) are enriched in low complexity. One can recognise a LysM domain in the interval 437-485 (QRHTVNGQENLYRIAIQYYGSGSPENVEKIRRANGLSGNNIRNGQQIVI).

The protein localises to the cell membrane. Functionally, promotes binding of soluble elastin peptides and tropoelastin to S.aureus cells although it is not able to promote bacterial adherence to immobilized elastin and, therefore, is not a microbial surface component recognizing adhesive matrix molecule (MSCRAMM). This chain is Elastin-binding protein EbpS (ebpS), found in Staphylococcus aureus (strain Mu50 / ATCC 700699).